Here is a 268-residue protein sequence, read N- to C-terminus: NH(3)-dependent NAD(+) synthetase (268 aa).

46 to 53 lines the ATP pocket; the sequence is GISGGQDS. A Mg(2+)-binding site is contributed by Asp52. Arg140 contacts deamido-NAD(+). Residue Thr160 participates in ATP binding. Residue Glu165 coordinates Mg(2+). Residues Lys173 and Asp180 each contribute to the deamido-NAD(+) site. Residues Lys189 and Thr211 each contribute to the ATP site. 260–261 lines the deamido-NAD(+) pocket; it reads HK.

This sequence belongs to the NAD synthetase family. Homodimer.

It carries out the reaction deamido-NAD(+) + NH4(+) + ATP = AMP + diphosphate + NAD(+) + H(+). The protein operates within cofactor biosynthesis; NAD(+) biosynthesis; NAD(+) from deamido-NAD(+) (ammonia route): step 1/1. Functionally, catalyzes the ATP-dependent amidation of deamido-NAD to form NAD. Uses ammonia as a nitrogen source. The chain is NH(3)-dependent NAD(+) synthetase from Buchnera aphidicola subsp. Schizaphis graminum (strain Sg).